We begin with the raw amino-acid sequence, 175 residues long: Small ribosomal subunit protein uS4 (175 aa).

An S4 RNA-binding domain is found at 105–169; it reads RRLQTIVYRQ…SPLADSLHPA (65 aa).

This sequence belongs to the universal ribosomal protein uS4 family. As to quaternary structure, part of the 30S ribosomal subunit. Contacts protein S5. The interaction surface between S4 and S5 is involved in control of translational fidelity.

One of the primary rRNA binding proteins, it binds directly to 16S rRNA where it nucleates assembly of the body of the 30S subunit. In terms of biological role, with S5 and S12 plays an important role in translational accuracy. The chain is Small ribosomal subunit protein uS4 from Haloquadratum walsbyi (strain DSM 16790 / HBSQ001).